The primary structure comprises 1136 residues: Probable RNA-dependent RNA polymerase 2 (1136 aa).

A disordered region spans residues 965–989 (SGDSGALSSSSAQPSPTYDPDLEVP). The span at 967 to 980 (DSGALSSSSAQPSP) shows a compositional bias: low complexity.

Belongs to the RdRP family.

It catalyses the reaction RNA(n) + a ribonucleoside 5'-triphosphate = RNA(n+1) + diphosphate. In terms of biological role, probably involved in the RNA silencing pathway and required for the generation of small interfering RNAs (siRNAs). This is Probable RNA-dependent RNA polymerase 2 (RDR2) from Oryza sativa subsp. japonica (Rice).